Here is a 605-residue protein sequence, read N- to C-terminus: Arginine--tRNA ligase (605 aa).

Residues 131 to 141 carry the 'HIGH' region motif; that stretch reads ANPTGPMHVGH. A disordered region spans residues 290–309; it reads PPPKSKKGQPAPAQAASNSA. Positions 298-309 are enriched in low complexity; sequence QPAPAQAASNSA.

The protein belongs to the class-I aminoacyl-tRNA synthetase family. In terms of assembly, monomer.

Its subcellular location is the cytoplasm. It catalyses the reaction tRNA(Arg) + L-arginine + ATP = L-arginyl-tRNA(Arg) + AMP + diphosphate. This Anaeromyxobacter sp. (strain Fw109-5) protein is Arginine--tRNA ligase.